A 369-amino-acid polypeptide reads, in one-letter code: Transmembrane protein adipocyte-associated 1 (369 aa).

N20 carries an N-linked (GlcNAc...) asparagine glycan. The next 7 helical transmembrane spans lie at 45–65, 73–93, 120–140, 148–168, 189–209, 237–257, and 262–282; these read LLLL…LPLA, SSPI…VGIA, FFLL…GHLE, VLAI…TLEI, QFWL…VILP, LLQG…LCCV, and FLYF…GFFG. N-linked (GlcNAc...) asparagine glycosylation occurs at N329.

It belongs to the UPF0359 family. Ubiquitous, with higher levels in heart, brain, lung, liver and kidney.

It is found in the membrane. The protein is Transmembrane protein adipocyte-associated 1 (Tpra1) of Mus musculus (Mouse).